The primary structure comprises 512 residues: Envelope glycoprotein (512 aa).

The N-terminal stretch at 1-15 (MFLQTALLLLSLGVA) is a signal peptide. 5 N-linked (GlcNAc...) asparagine; by host glycosylation sites follow: N185, N263, N289, N378, and N416. Residues 479–502 (GQLGGLLYGNIGVYLLIAFAFVLL) form a helical membrane-spanning segment.

It localises to the virion membrane. Attaches the virus to host cellular receptor and later induces fusion of virion with host membrane. This Thogoto virus (isolate SiAr 126) (Tho) protein is Envelope glycoprotein.